A 116-amino-acid chain; its full sequence is Cell division protein FtsL (116 aa).

The Cytoplasmic segment spans residues 1–24; the sequence is MMLTNRQIRVRLFESLKNSFFKKT. The chain crosses the membrane as a helical span at residues 25–45; the sequence is VGISFALLFILLITAFSLIVV. The Periplasmic segment spans residues 46-116; that stretch reads RFEYKLQLNE…NEQKEELNNE (71 aa).

It belongs to the FtsL family. As to quaternary structure, part of a complex composed of FtsB, FtsL and FtsQ.

The protein resides in the cell inner membrane. Its function is as follows. Essential cell division protein. May link together the upstream cell division proteins, which are predominantly cytoplasmic, with the downstream cell division proteins, which are predominantly periplasmic. The polypeptide is Cell division protein FtsL (Francisella tularensis subsp. tularensis (strain SCHU S4 / Schu 4)).